Consider the following 397-residue polypeptide: Xylose isomerase (397 aa).

Residues histidine 54 and aspartate 57 contribute to the active site. Positions 181, 217, 220, 245, 255, 257, and 293 each coordinate Mg(2+).

The protein belongs to the xylose isomerase family. As to quaternary structure, homotetramer. Mg(2+) serves as cofactor.

The protein localises to the cytoplasm. The catalysed reaction is alpha-D-xylose = alpha-D-xylulofuranose. The sequence is that of Xylose isomerase from Clavibacter sepedonicus (Clavibacter michiganensis subsp. sepedonicus).